The following is a 384-amino-acid chain: Glutamate 5-kinase (384 aa).

K24 lines the ATP pocket. Residues S64, D149, and N161 each contribute to the substrate site. Residues 181–182 (TD) and 223–229 (TGGMRTK) each bind ATP. In terms of domain architecture, PUA spans 288–370 (PGAILIDAGA…RDIQTLLGYT (83 aa)).

Belongs to the glutamate 5-kinase family.

It is found in the cytoplasm. It carries out the reaction L-glutamate + ATP = L-glutamyl 5-phosphate + ADP. Its pathway is amino-acid biosynthesis; L-proline biosynthesis; L-glutamate 5-semialdehyde from L-glutamate: step 1/2. Its function is as follows. Catalyzes the transfer of a phosphate group to glutamate to form L-glutamate 5-phosphate. The polypeptide is Glutamate 5-kinase (Xylella fastidiosa (strain M23)).